A 620-amino-acid polypeptide reads, in one-letter code: Membrane protein insertase YidC (620 aa).

A run of 6 helical transmembrane segments spans residues 5–25 (QIIG…FMST), 343–363 (LGWP…FDGL), 366–386 (VFSS…LVLL), 436–456 (LSGC…FNFF), 482–502 (LPFT…LMTI), and 529–549 (PVVF…YYFV).

Belongs to the OXA1/ALB3/YidC family. Type 1 subfamily. In terms of assembly, interacts with the Sec translocase complex via SecD. Specifically interacts with transmembrane segments of nascent integral membrane proteins during membrane integration.

Its subcellular location is the cell inner membrane. Required for the insertion and/or proper folding and/or complex formation of integral membrane proteins into the membrane. Involved in integration of membrane proteins that insert both dependently and independently of the Sec translocase complex, as well as at least some lipoproteins. Aids folding of multispanning membrane proteins. The protein is Membrane protein insertase YidC of Cytophaga hutchinsonii (strain ATCC 33406 / DSM 1761 / CIP 103989 / NBRC 15051 / NCIMB 9469 / D465).